The chain runs to 499 residues: Alpha-internexin (499 aa).

Residues 1-87 (MSFGSEHYLC…SQAAARTNEY (87 aa)) form a head region. S72 is subject to Phosphoserine. The tract at residues 88-129 (KIIRTNEKEQLQGLNDRFAVFIEKVHQLETQNRALEAELAAL) is coil 1A. The 314-residue stretch at 94–407 (EKEQLQGLND…KLLEGEETRF (314 aa)) folds into the IF rod domain. A linker 1 region spans residues 130-142 (RQRHAEPSRVGEL). Residues 143 to 238 (FQRELRDLRA…QVHDEEVAEL (96 aa)) form a coil 1B region. Residue S219 is modified to Phosphoserine. The segment at 239–262 (LATLQASSQAAAEVDVTVAKPDLT) is linker 2. The interval 263-408 (SALREIRAQY…LLEGEETRFS (146 aa)) is coil 2. K290 is modified (N6-acetyllysine). S335 is modified (phosphoserine). Positions 409-499 (TSGLSISGLN…EETTISSQKI (91 aa)) are tail. The tract at residues 441–466 (STGLSLKKEEEEEEASKVASKKTSQI) is disordered. 2 positions are modified to phosphoserine: S469 and S496.

It belongs to the intermediate filament family. As to quaternary structure, forms homodimers (in vitro). Forms heterodimers with NEFL, NEFM or NEFH (in vitro). O-glycosylated. As to expression, found predominantly in adult CNS.

Class-IV neuronal intermediate filament that is able to self-assemble. It is involved in the morphogenesis of neurons. It may form an independent structural network without the involvement of other neurofilaments or it may cooperate with NEFL to form the filamentous backbone to which NEFM and NEFH attach to form the cross-bridges. May also cooperate with the neuronal intermediate filament protein PRPH to form filamentous networks. The protein is Alpha-internexin (INA) of Homo sapiens (Human).